Reading from the N-terminus, the 379-residue chain is Methionine aminopeptidase 1 (379 aa).

The C6H2-type zinc-finger motif lies at 7–60; it reads KHICCGIDCNNEADRLQCPKCLNDGVKSYFCGQECFRNSWNIHKHLHRPPNVEK. Zn(2+)-binding residues include cysteine 10, cysteine 15, cysteine 24, cysteine 27, cysteine 37, cysteine 41, histidine 49, and histidine 53. Position 192 (histidine 192) interacts with a protein. Residues aspartate 209, aspartate 220, and histidine 289 each coordinate Zn(2+). Histidine 296 is an a protein binding site. Glutamate 322 and glutamate 353 together coordinate Zn(2+). Serine 373 is modified (phosphoserine).

It belongs to the peptidase M24A family. Methionine aminopeptidase type 1 subfamily. Associates with the 60S ribosomal subunit of the 80S translational complex. The cofactor is Zn(2+). Co(2+) is required as a cofactor. It depends on Mn(2+) as a cofactor. Requires Fe(2+) as cofactor.

The protein localises to the cytoplasm. Its subcellular location is the nucleus. It localises to the nucleolus. It catalyses the reaction Release of N-terminal amino acids, preferentially methionine, from peptides and arylamides.. In terms of biological role, cotranslationally removes the N-terminal methionine from nascent proteins. The N-terminal methionine is often cleaved when the second residue in the primary sequence is small and uncharged (Met-Ala-, Cys, Gly, Pro, Ser, Thr, or Val). The sequence is that of Methionine aminopeptidase 1 (fma1) from Schizosaccharomyces pombe (strain 972 / ATCC 24843) (Fission yeast).